The chain runs to 1086 residues: NAD(P) transhydrogenase, mitochondrial (1086 aa).

The transit peptide at 1–43 directs the protein to the mitochondrion; it reads MAHLLKTVVAGCSCPFLSNLGSSKVLPGKRDFVRTLRTHQALW. At 44-474 the chain is on the mitochondrial matrix side; the sequence is CKSPVKPGIP…TVSMYTKTLT (431 aa). Lys-70 carries the N6-acetyllysine modification. Lys-117 is subject to N6-succinyllysine. 182 to 184 contributes to the NAD(+) binding site; the sequence is RVT. N6-succinyllysine is present on Lys-224. Residues Val-237, 257 to 259, and Gly-287 contribute to the NAD(+) site; that span reads DTR. An N6-succinyllysine modification is found at Lys-294. Residues Glu-300 and Leu-319 each contribute to the NAD(+) site. N6-succinyllysine is present on Lys-331. Lys-397 is subject to N6-acetyllysine. 4 helical membrane passes run 475 to 493, 501 to 521, 527 to 546, and 558 to 578; these read TASVYSAGLTGMLGLGIVA, MVTTFGLAGIIGYHTVWGVTP, LMSVTNAISGLTAVGGLALM, and SLAALATFISSVNIAGGFLVT. The Mitochondrial matrix segment spans residues 579–595; sequence QRMLDMFKRPTDPPEYN. The next 5 membrane-spanning stretches (helical) occupy residues 596-616, 622-642, 646-666, 672-691, and 702-722; these read YLYLLPGGTFVGGYLAALYGG, IMYLGSGLCCVGALGGLSTQG, LGNALGMIGVAGGLAATLGGL, LLAQMSGAMAMGGTIGLTIA, and LVAAFHSLVGLAAVLTCMAEY. The Cytoplasmic portion of the chain corresponds to 723–739; it reads IVEYPHFAMDATSNFTK. Helical transmembrane passes span 740–760, 778–797, 801–819, 833–853, and 857–879; these read IVAYLGTYIGGVTFSGSLVAY, HALNAGLLAASVGGIIPFMA, FTTGITCLGSVSGLSTLMG, VVITVLNSYSGWALCAEGFLL, and LLTIVGALIGSSGAILSYIMCVA. Over 880–1086 the chain is Mitochondrial matrix; the sequence is MNRSLANVIL…QAKVRESYQK (207 aa). Residues Tyr-933, 965–970, 1007–1011, 1026–1027, 1042–1049, and 1068–1069 contribute to the NADP(+) site; these read VAGRMP, GANDT, GM, KRSLGVGY, and DA. Lys-1079 bears the N6-succinyllysine mark.

The protein in the N-terminal section; belongs to the AlaDH/PNT family. This sequence in the C-terminal section; belongs to the PNT beta subunit family. As to quaternary structure, homodimer. As to expression, widely expressed with expression most readily detectable in adrenal, heart, kidney, thyroid and adipose tissues.

Its subcellular location is the mitochondrion inner membrane. The enzyme catalyses NAD(+) + NADPH + H(+)(in) = NADH + NADP(+) + H(+)(out). Functionally, the transhydrogenation between NADH and NADP is coupled to respiration and ATP hydrolysis and functions as a proton pump across the membrane. May play a role in reactive oxygen species (ROS) detoxification in the adrenal gland. The chain is NAD(P) transhydrogenase, mitochondrial (Nnt) from Mus musculus (Mouse).